A 310-amino-acid chain; its full sequence is MPLLVDGQRVRLPRSAVELVRAHPPLEERARLLRGQSVQQVGPQGLLYVQQRELAVTSPKDGSISILGSDDATTCHIVVLRHTGNGATCLTHCDGSDTKAEVPLIMSSIKSFSEHAECGRLEVHLVGGFSDDRQLSQKLTHQLLSEFDKQDDDIHLVTLCVTELNDREENENHFPIIYGIAVNIKTAEIYRASFQDRGPEEQLRAARALAGGPMISIYDAKTEQLRIGPCSWTPFPQVDFWLQQDDKQILESLSTSPLAEPPHFVEHIRSTLMFLKKFPSPENILFPGNKALLYKKNKDGLWEKISSPGS.

As to quaternary structure, monomer.

Its subcellular location is the cytoplasm. The enzyme catalyses N-terminal L-asparaginyl-[protein] + H2O + H(+) = N-terminal L-aspartyl-[protein] + NH4(+). In terms of biological role, N-terminal asparagine deamidase that mediates deamidation of N-terminal asparagine residues to aspartate. Required for the ubiquitin-dependent turnover of intracellular proteins that initiate with Met-Asn. These proteins are acetylated on the retained initiator methionine and can subsequently be modified by the removal of N-acetyl methionine by acylaminoacid hydrolase (AAH). Conversion of the resulting N-terminal asparagine to aspartate by NTAN1/PNAD renders the protein susceptible to arginylation, polyubiquitination and degradation as specified by the N-end rule. This enzyme does not act on substrates with internal or C-terminal asparagines and does not act on glutamine residues in any position. The protein is Protein N-terminal asparagine amidohydrolase of Mus musculus (Mouse).